A 360-amino-acid chain; its full sequence is MATTVHLSSFSLFIQSRGRRDNSISSVKSLKKRTGLSPSSALTSQGGRDMIPPEGKCNDHNSAFDFKLYMIRKAESVNAALDVSVPLREPLTVQEAVRYSLLAGGKRVRPLLCIAVCELVGGDEATAMSAACAVEMIHTSSLIHDDLPCMDNADLRRGKPTNHKVYGEDMAVLAGDALLALAFEHMTVVSSGLVAPERMIRAVVELARAIGTTGLVAGQMIDLASERLNPDKVGLEHLEFIHLHKTAALLEAAAVLGVIMGGGTEEEIEKLRKYARCIGLLFQVVDDILDVTKSTEELGKTAGKDVMAGKLTYPRLIGLERSKEVAEKLRREAEEQLLGFDPSKAAPLVALASYIACRHN.

Residues 1 to 39 (MATTVHLSSFSLFIQSRGRRDNSISSVKSLKKRTGLSPS) constitute a chloroplast transit peptide. A disordered region spans residues 24-54 (ISSVKSLKKRTGLSPSSALTSQGGRDMIPPE). Positions 36–46 (LSPSSALTSQG) are enriched in polar residues. Isopentenyl diphosphate contacts are provided by lysine 106, arginine 109, and histidine 138. Residues aspartate 145 and aspartate 151 each contribute to the Mg(2+) site. Residue arginine 156 participates in dimethylallyl diphosphate binding. Residue arginine 157 participates in isopentenyl diphosphate binding. Dimethylallyl diphosphate is bound by residues lysine 245, threonine 246, glutamine 283, lysine 300, and lysine 310.

The protein belongs to the FPP/GGPP synthase family. In terms of assembly, monomer. It depends on Mg(2+) as a cofactor. As to expression, mainly expressed in roots.

The protein localises to the plastid. It is found in the chloroplast. The catalysed reaction is isopentenyl diphosphate + dimethylallyl diphosphate = (2E)-geranyl diphosphate + diphosphate. It carries out the reaction isopentenyl diphosphate + (2E)-geranyl diphosphate = (2E,6E)-farnesyl diphosphate + diphosphate. It catalyses the reaction isopentenyl diphosphate + (2E,6E)-farnesyl diphosphate = (2E,6E,10E)-geranylgeranyl diphosphate + diphosphate. It participates in isoprenoid biosynthesis; farnesyl diphosphate biosynthesis; farnesyl diphosphate from geranyl diphosphate and isopentenyl diphosphate: step 1/1. It functions in the pathway isoprenoid biosynthesis; geranyl diphosphate biosynthesis; geranyl diphosphate from dimethylallyl diphosphate and isopentenyl diphosphate: step 1/1. The protein operates within isoprenoid biosynthesis; geranylgeranyl diphosphate biosynthesis; geranylgeranyl diphosphate from farnesyl diphosphate and isopentenyl diphosphate: step 1/1. Functionally, catalyzes the trans-addition of the three molecules of IPP onto DMAPP to form geranylgeranyl pyrophosphate. The sequence is that of Geranylgeranyl pyrophosphate synthase 3, chloroplastic (GGPP3) from Arabidopsis thaliana (Mouse-ear cress).